Reading from the N-terminus, the 541-residue chain is Chaperonin GroEL 2 (541 aa).

Residues Thr-30–Pro-33, Lys-51, Asp-87–Thr-91, Gly-414, and Asp-495 contribute to the ATP site.

Belongs to the chaperonin (HSP60) family. As to quaternary structure, forms a cylinder of 14 subunits composed of two heptameric rings stacked back-to-back. Interacts with the co-chaperonin GroES.

Its subcellular location is the cytoplasm. The catalysed reaction is ATP + H2O + a folded polypeptide = ADP + phosphate + an unfolded polypeptide.. Together with its co-chaperonin GroES, plays an essential role in assisting protein folding. The GroEL-GroES system forms a nano-cage that allows encapsulation of the non-native substrate proteins and provides a physical environment optimized to promote and accelerate protein folding. This Cereibacter sphaeroides (Rhodobacter sphaeroides) protein is Chaperonin GroEL 2.